The chain runs to 330 residues: Putative aminopeptidase (330 aa).

Residues His65 and Asp168 each contribute to the a divalent metal cation site. Glu198 acts as the Proton acceptor in catalysis. The a divalent metal cation site is built by Glu199, Asp221, and His307.

The protein belongs to the peptidase M42 family. It depends on a divalent metal cation as a cofactor.

The polypeptide is Putative aminopeptidase (celM) (Acetivibrio thermocellus (Hungateiclostridium thermocellum)).